Here is a 111-residue protein sequence, read N- to C-terminus: Ig kappa chain V region 3368 (111 aa).

Residues 1 to 24 (ADIVMTQTPSSVSAAVGGTVTIKC) are framework-1. The complementarity-determining-1 stretch occupies residues 25 to 35 (QASESIGNELA). The segment at 36 to 50 (WYQQKPGQPPKLLIY) is framework-2. A complementarity-determining-2 region spans residues 51-57 (RASKLAS). The framework-3 stretch occupies residues 58–89 (GVSSRFKGSGSGTEFTLTISGVQCDDAGIYYC). The tract at residues 90–101 (QQDWNSNNVVNN) is complementarity-determining-3. Positions 102 to 111 (FGGGTEVVVK) are framework-4.

The chain is Ig kappa chain V region 3368 from Oryctolagus cuniculus (Rabbit).